Here is a 221-residue protein sequence, read N- to C-terminus: GTP-binding nuclear protein Ran-A1 (221 aa).

One can recognise a Small GTPase Ran-type domain in the interval 10 to 174; it reads DYPSFKLVIV…LYLARKLAGD (165 aa). 21-28 provides a ligand contact to GTP; it reads DGGTGKTT. The tract at residues 40–48 is switch-I; it reads KKYEPTIGV. GTP-binding positions include Gly71, 125-128, and 153-155; these read NKVD and SAK. The tract at residues 71 to 87 is switch-II; sequence GQEKFGGLRDGYYIHGQ. The span at 199–208 shows a compositional bias: low complexity; sequence QHEAELAAAA. The interval 199-221 is disordered; sequence QHEAELAAAASQPLPDDDDETFD.

This sequence belongs to the small GTPase superfamily. Ran family. In terms of assembly, found in a nuclear export complex with RanGTP, exportin and pre-miRNA.

It localises to the nucleus. In terms of biological role, GTP-binding protein involved in nucleocytoplasmic transport. Required for the import of protein into the nucleus and also for RNA export. Involved in chromatin condensation and control of cell cycle. The protein is GTP-binding nuclear protein Ran-A1 (RAN-A1) of Nicotiana tabacum (Common tobacco).